The sequence spans 655 residues: Probable potassium transport system protein Kup (655 aa).

12 helical membrane-spanning segments follow: residues 19–39 (GLLISLGIIYGDIGTSPLYVM), 42–62 (IAGGNVISENLILGGLSCVFW), 102–122 (VWPAMIGGAAMLADGIITPPI), 132–152 (LIFNKDIPTIPIVLAIIVMLF), 161–181 (IVGKFFGPIMFIWFAMLATLG), 214–234 (SGFWLLGAVFLCTTGAEALYS), 246–266 (ISWIFVKLALLINYFGQGAWI), 282–302 (IMPEWFIVYGIIIATMAAIIA), 338–358 (LFIPSINLLLLAGCIFVVLWF), 370–390 (LAINITFLMTTILLAYYLLII), 395–415 (FIWVGLLILMYLIIEVSFLVA), and 420–440 (FFHGGYFTLISSGILAFIMII).

Belongs to the HAK/KUP transporter (TC 2.A.72) family.

The protein localises to the cell inner membrane. The catalysed reaction is K(+)(in) + H(+)(in) = K(+)(out) + H(+)(out). In terms of biological role, transport of potassium into the cell. Likely operates as a K(+):H(+) symporter. This chain is Probable potassium transport system protein Kup, found in Cytophaga hutchinsonii (strain ATCC 33406 / DSM 1761 / CIP 103989 / NBRC 15051 / NCIMB 9469 / D465).